We begin with the raw amino-acid sequence, 717 residues long: MAAYTQFGYGGFPSASQLLPPSVQTTEDASANVNVNVNEALVMTNAPAMSPTGGQDCQGSQPSGGAGGDASSGALSPNALSQNSNAATVVGAGGGSSAGGGGPADLATGGSLDGNGVGTTPTAGGAGGGGSCCENGRPIMTDPVSGQTVCSCQYDSARLALSSYSRLPAASVGVYGTPYPSTDQNPYQSIGVDSSAFYSPLSNPYGLKDTGAGPEMGAWTSAGLQPTTGYYSYDPMSAYGGLLVSNSSYGASYDLAARRKNATRESTATLKAWLNEHKKNPYPTKGEKIMLAIITKMTLTQVSTWFANARRRLKKENKMTWEPKNRTDDDDDALVSDDEKDKEDLEPSKGSQGSVSLAKDETKEEEDAIDEDQKCLGQANILRAGFGYPSAGSGSGGYPGGGGSSSGHPGGYHPYHHQHPAYYQAGQQGGMLPFHGENSKLQTDLGDPKNQLGRDCGVPIPATKPKIWSLADTVGCKTPPPAYMGHQSMPLQQQQQQQQQQQQAQHQYPPSEAGRDQQLFNGAAAPYLRPHTTAYGGFLGATTQQLHTTNNSIPYSNMPPQQQQPQQQQQQLQQGGTIHTTGSSSGPIIPLQFHNRHPQQQQQLQQQSQSTASQRAMGFLEAQPDTPPQTPPNMKVLSGALSLLPTATQVPMTATCRSSNAFGFPASGYPMNFSARLGEYSPRDDYSSGNSSSSSSSSPQLQRNEAMFKPLFKKFTN.

Disordered stretches follow at residues 46 to 80 (APAM…PNAL), 94 to 130 (GGSS…GGGG), 317 to 371 (NKMT…AIDE), 395 to 418 (SGGY…YHHQ), 478 to 516 (TPPP…AGRD), 549 to 615 (TNNS…ASQR), and 675 to 717 (ARLG…KFTN). Residues 94–103 (GGSSAGGGGP) are compositionally biased toward gly residues. Residues 255–317 (LAARRKNATR…NARRRLKKEN (63 aa)) constitute a DNA-binding region (homeobox; TALE-type). Over residues 317 to 327 (NKMTWEPKNRT) the composition is skewed to basic and acidic residues. Phosphoserine is present on S336. Positions 337–347 (DDEKDKEDLEP) are enriched in basic and acidic residues. Residues 395–410 (SGGYPGGGGSSSGHPG) show a composition bias toward gly residues. Low complexity-rich tracts occupy residues 492–507 (QQQQ…AQHQ), 559–589 (PPQQ…GPII), 599–614 (QQQQ…TASQ), and 687–698 (SSGNSSSSSSSS).

It belongs to the TALE/IRO homeobox family.

The protein resides in the nucleus. Controls proneural and vein forming genes. Positive transcriptional controller of AC-SC (achaete-scute). May act as an activator that interacts with the transcriptional complex assembled on the AC and SC promoters and participates in transcription initiation. In Drosophila melanogaster (Fruit fly), this protein is Homeobox protein araucan (ara).